The following is a 607-amino-acid chain: Elongation factor 4 (607 aa).

The 183-residue stretch at 11 to 193 (ENIRNFSIIA…KIVEVVPAPD (183 aa)) folds into the tr-type G domain. GTP contacts are provided by residues 23–28 (DHGKST) and 140–143 (NKID).

It belongs to the TRAFAC class translation factor GTPase superfamily. Classic translation factor GTPase family. LepA subfamily.

The protein localises to the cell membrane. The catalysed reaction is GTP + H2O = GDP + phosphate + H(+). Required for accurate and efficient protein synthesis under certain stress conditions. May act as a fidelity factor of the translation reaction, by catalyzing a one-codon backward translocation of tRNAs on improperly translocated ribosomes. Back-translocation proceeds from a post-translocation (POST) complex to a pre-translocation (PRE) complex, thus giving elongation factor G a second chance to translocate the tRNAs correctly. Binds to ribosomes in a GTP-dependent manner. The sequence is that of Elongation factor 4 from Staphylococcus aureus (strain MW2).